The primary structure comprises 109 residues: Irditoxin subunit A (109 aa).

A signal peptide spans methionine 1–alanine 19. A propeptide spanning residues aspartate 20–glycine 34 is cleaved from the precursor. The residue at position 35 (glutamine 35) is a Pyrrolidone carboxylic acid. Disulfide bonds link cysteine 44-cysteine 66, cysteine 47-cysteine 55, cysteine 61-cysteine 85, cysteine 89-cysteine 100, and cysteine 101-cysteine 106.

This sequence belongs to the three-finger toxin family. Ancestral subfamily. Boigatoxin sub-subfamily. In terms of assembly, heterodimer of A and B chains; disulfide-linked. In terms of tissue distribution, expressed by the venom gland.

It is found in the secreted. Functionally, this bird and reptile-specific postsynaptic neurotoxin inhibits the chick muscle alpha-1-beta-1-gamma-delta (CHRNA1-CHRNB1-CHRNG-CHNRD) nicotinic acetylcholine receptor (nAChR) 100-fold more compared with the mouse receptor. In vivo, produces rapid flaccid paralysis, dyspnea and increased respiratory rate in geckos. At sublethal doses geckos were immobilized for up to three days and then recovered. Chicks injected with lethal doses showed rapid onset of inactivity, dyspnea and neck droop, and no extended paralysis with survival was seen. This Boiga irregularis (Brown tree snake) protein is Irditoxin subunit A.